An 800-amino-acid polypeptide reads, in one-letter code: MKMKIIFLILILIFSINIIKCDKEFKMLTLLTAQVDDLGFNNMINQGRIEVAKGMNIEDSRLLVVEGFNETFKHLLPIVQNDDIDLVICSSSGHLQACRAIAEMYINSTTIKTQFLVRGSSSPTRNLIYISYNYASANYISGYFAALFSKTGKIGFVSPGQAANNNDSFVYAFWVGARQVNPDIKFYYYNIGNYLDVDKTVAATNDLLDMGCDVVGNTLDDFSTGDASIARGFPAIGTNGFPQRHVYGENVIYSYSYNWTKFFLPIAESVKSGNTNNSQWYADFDFDENKNFYHLDYGFEVNQSILDKMNTEIDYLKSTDRMSHPYYCNELIPQYAKENNLKLANVTGITLPIGCVTHQTFLSINKPFPGMTYLGNYKIKLVEVEFSQSLQYGFSITTGVLIAITIIMMLGIVRYKSTPSIRSASPIFLNFILAGGIIVYIGIIVWVGPANDHQCNARLWLVTLGFSTLIGSLVVKNFRIWLIFDNPELKSISITNYQLFPWVGACLVINIILMSILTSVGDLREIDAQGIDSLGKYEFMKVCKMNSSGASTLYTILAYFAALLLVGVFVSWKIRIVDIQEFNESKAIANTLYAISFCLFVIVPLMISPQDKQSETIVLCTAGLFITTAALLIIFTPKFWRVFTLGDGGTNDMFRKKQSNVATARAESSKSSSGPKLNRRGNLVSDDFTDTETSISEKKVNVVAGAVLAEFTDDTISEFDDNNIEQDNDNDNDNNNNNNNNNNNNNNNNNNNNNNNNNNNNNNNNNNNNNNNNNTNTSQPNDEKVEEKQQNDTEEEDKNQ.

Residues 1–21 (MKMKIIFLILILIFSINIIKC) form the signal peptide. At 22–392 (DKEFKMLTLL…EVEFSQSLQY (371 aa)) the chain is on the extracellular side. 7 N-linked (GlcNAc...) asparagine glycosylation sites follow: asparagine 69, asparagine 107, asparagine 166, asparagine 258, asparagine 276, asparagine 302, and asparagine 345. A helical membrane pass occupies residues 393 to 413 (GFSITTGVLIAITIIMMLGIV). Over 414 to 426 (RYKSTPSIRSASP) the chain is Cytoplasmic. Residues 427-447 (IFLNFILAGGIIVYIGIIVWV) traverse the membrane as a helical segment. The Extracellular segment spans residues 448–463 (GPANDHQCNARLWLVT). A helical transmembrane segment spans residues 464 to 484 (LGFSTLIGSLVVKNFRIWLIF). Topologically, residues 485–499 (DNPELKSISITNYQL) are cytoplasmic. A helical membrane pass occupies residues 500–520 (FPWVGACLVINIILMSILTSV). Residues 521-551 (GDLREIDAQGIDSLGKYEFMKVCKMNSSGAS) are Extracellular-facing. Asparagine 546 carries an N-linked (GlcNAc...) asparagine glycan. The helical transmembrane segment at 552-572 (TLYTILAYFAALLLVGVFVSW) threads the bilayer. Residues 573–586 (KIRIVDIQEFNESK) lie on the Cytoplasmic side of the membrane. A helical transmembrane segment spans residues 587–607 (AIANTLYAISFCLFVIVPLMI). The Extracellular portion of the chain corresponds to 608 to 616 (SPQDKQSET). A helical membrane pass occupies residues 617–637 (IVLCTAGLFITTAALLIIFTP). Residues 638–800 (KFWRVFTLGD…NDTEEEDKNQ (163 aa)) lie on the Cytoplasmic side of the membrane. Disordered regions lie at residues 658–694 (QSNV…TETS) and 718–800 (EFDD…DKNQ). The span at 718–732 (EFDDNNIEQDNDNDN) shows a compositional bias: acidic residues. Residues 733-774 (DNNNNNNNNNNNNNNNNNNNNNNNNNNNNNNNNNNNNNNNNN) show a composition bias toward low complexity. The segment covering 781-791 (NDEKVEEKQQN) has biased composition (basic and acidic residues).

It in the N-terminal section; belongs to the BMP lipoprotein family. In the C-terminal section; belongs to the G-protein coupled receptor 3 family. GABA-B receptor subfamily.

The protein resides in the membrane. This is Metabotropic glutamate receptor-like protein C (grlC) from Dictyostelium discoideum (Social amoeba).